Reading from the N-terminus, the 404-residue chain is N-acetylglucosamine-6-phosphate deacetylase (404 aa).

Residue Glu143 coordinates a divalent metal cation. 154–155 provides a ligand contact to substrate; the sequence is AH. Positions 211 and 232 each coordinate a divalent metal cation. Substrate contacts are provided by residues 235-236, Arg243, and 269-272; these read NA and DGIH. The active-site Proton donor/acceptor is Asp294. 328–330 serves as a coordination point for substrate; sequence LSG.

It belongs to the metallo-dependent hydrolases superfamily. NagA family. A divalent metal cation serves as cofactor.

It carries out the reaction N-acetyl-D-glucosamine 6-phosphate + H2O = D-glucosamine 6-phosphate + acetate. It participates in amino-sugar metabolism; N-acetylneuraminate degradation. Its function is as follows. Hydrolyzes the N-glycolyl group from N-glycolylglucosamine 6-phosphate (GlcNGc-6-P) in the N-glycolylneuraminic acid (Neu5Gc) degradation pathway. The protein is N-acetylglucosamine-6-phosphate deacetylase (amdhd2) of Danio rerio (Zebrafish).